Reading from the N-terminus, the 244-residue chain is Uridylate kinase (244 aa).

Position 11 to 14 (11 to 14 (KLSG)) interacts with ATP. Positions 19 to 24 (GSLGYG) are involved in allosteric activation by GTP. Position 53 (G53) interacts with UMP. 2 residues coordinate ATP: G54 and R58. Residues D73 and 134–141 (SGNPFFTT) contribute to the UMP site. ATP is bound by residues T161, Y167, and D170.

It belongs to the UMP kinase family. In terms of assembly, homohexamer.

The protein localises to the cytoplasm. It carries out the reaction UMP + ATP = UDP + ADP. Its pathway is pyrimidine metabolism; CTP biosynthesis via de novo pathway; UDP from UMP (UMPK route): step 1/1. With respect to regulation, allosterically activated by GTP. Inhibited by UTP. In terms of biological role, catalyzes the reversible phosphorylation of UMP to UDP. The polypeptide is Uridylate kinase (Trichodesmium erythraeum (strain IMS101)).